The sequence spans 87 residues: Small ribosomal subunit protein uS17 (87 aa).

Belongs to the universal ribosomal protein uS17 family. In terms of assembly, part of the 30S ribosomal subunit.

Functionally, one of the primary rRNA binding proteins, it binds specifically to the 5'-end of 16S ribosomal RNA. This chain is Small ribosomal subunit protein uS17, found in Staphylococcus aureus (strain JH1).